The sequence spans 253 residues: 5'/3'-nucleotidase SurE (253 aa).

Asp-8, Asp-9, Ser-39, and Asn-92 together coordinate a divalent metal cation.

It belongs to the SurE nucleotidase family. Requires a divalent metal cation as cofactor.

Its subcellular location is the cytoplasm. It catalyses the reaction a ribonucleoside 5'-phosphate + H2O = a ribonucleoside + phosphate. The enzyme catalyses a ribonucleoside 3'-phosphate + H2O = a ribonucleoside + phosphate. It carries out the reaction [phosphate](n) + H2O = [phosphate](n-1) + phosphate + H(+). Its function is as follows. Nucleotidase with a broad substrate specificity as it can dephosphorylate various ribo- and deoxyribonucleoside 5'-monophosphates and ribonucleoside 3'-monophosphates with highest affinity to 3'-AMP. Also hydrolyzes polyphosphate (exopolyphosphatase activity) with the preference for short-chain-length substrates (P20-25). Might be involved in the regulation of dNTP and NTP pools, and in the turnover of 3'-mononucleotides produced by numerous intracellular RNases (T1, T2, and F) during the degradation of various RNAs. In Escherichia fergusonii (strain ATCC 35469 / DSM 13698 / CCUG 18766 / IAM 14443 / JCM 21226 / LMG 7866 / NBRC 102419 / NCTC 12128 / CDC 0568-73), this protein is 5'/3'-nucleotidase SurE.